Reading from the N-terminus, the 287-residue chain is HTH-type transcriptional regulator MurR (287 aa).

The 77-residue stretch at 1-77 (MLYLAKMRNA…MALIEEYSVN (77 aa)) folds into the HTH rpiR-type domain. Residues 37–56 (SRNLAKQLEVSQSSIVKFAQ) constitute a DNA-binding region (H-T-H motif). The region spanning 128–268 (VINLISKARL…FVGMVQLNDV (141 aa)) is the SIS domain.

As to quaternary structure, homotetramer.

It functions in the pathway amino-sugar metabolism; N-acetylmuramate degradation [regulation]. Functionally, represses the expression of the murPQ operon involved in the uptake and degradation of N-acetylmuramic acid (MurNAc). Binds to two adjacent inverted repeats within the operator region. MurNAc 6-phosphate, the substrate of MurQ, is the specific inducer that weakens binding of MurR to the operator. The protein is HTH-type transcriptional regulator MurR of Citrobacter koseri (strain ATCC BAA-895 / CDC 4225-83 / SGSC4696).